A 45-amino-acid polypeptide reads, in one-letter code: Large ribosomal subunit protein bL34 (45 aa).

A disordered region spans residues 23-45 (ETPGGKKVLSARRAKGRKNLIAK). Positions 31–45 (LSARRAKGRKNLIAK) are enriched in basic residues.

It belongs to the bacterial ribosomal protein bL34 family.

This Elusimicrobium minutum (strain Pei191) protein is Large ribosomal subunit protein bL34.